Reading from the N-terminus, the 364-residue chain is Chorismate synthase (364 aa).

NADP(+) contacts are provided by Arg-48 and Arg-54. Residues 125-127, 238-239, Gly-278, 293-297, and Arg-319 contribute to the FMN site; these read RSS, NA, and KPTSS.

The protein belongs to the chorismate synthase family. As to quaternary structure, homotetramer. Requires FMNH2 as cofactor.

The enzyme catalyses 5-O-(1-carboxyvinyl)-3-phosphoshikimate = chorismate + phosphate. Its pathway is metabolic intermediate biosynthesis; chorismate biosynthesis; chorismate from D-erythrose 4-phosphate and phosphoenolpyruvate: step 7/7. Its function is as follows. Catalyzes the anti-1,4-elimination of the C-3 phosphate and the C-6 proR hydrogen from 5-enolpyruvylshikimate-3-phosphate (EPSP) to yield chorismate, which is the branch point compound that serves as the starting substrate for the three terminal pathways of aromatic amino acid biosynthesis. This reaction introduces a second double bond into the aromatic ring system. This chain is Chorismate synthase, found in Shewanella woodyi (strain ATCC 51908 / MS32).